Consider the following 180-residue polypeptide: Crossover junction endodeoxyribonuclease RuvC (180 aa).

Catalysis depends on residues D7, E66, and D138. 3 residues coordinate Mg(2+): D7, E66, and D138.

Belongs to the RuvC family. As to quaternary structure, homodimer which binds Holliday junction (HJ) DNA. The HJ becomes 2-fold symmetrical on binding to RuvC with unstacked arms; it has a different conformation from HJ DNA in complex with RuvA. In the full resolvosome a probable DNA-RuvA(4)-RuvB(12)-RuvC(2) complex forms which resolves the HJ. It depends on Mg(2+) as a cofactor.

The protein localises to the cytoplasm. It carries out the reaction Endonucleolytic cleavage at a junction such as a reciprocal single-stranded crossover between two homologous DNA duplexes (Holliday junction).. Its function is as follows. The RuvA-RuvB-RuvC complex processes Holliday junction (HJ) DNA during genetic recombination and DNA repair. Endonuclease that resolves HJ intermediates. Cleaves cruciform DNA by making single-stranded nicks across the HJ at symmetrical positions within the homologous arms, yielding a 5'-phosphate and a 3'-hydroxyl group; requires a central core of homology in the junction. The consensus cleavage sequence is 5'-(A/T)TT(C/G)-3'. Cleavage occurs on the 3'-side of the TT dinucleotide at the point of strand exchange. HJ branch migration catalyzed by RuvA-RuvB allows RuvC to scan DNA until it finds its consensus sequence, where it cleaves and resolves the cruciform DNA. The polypeptide is Crossover junction endodeoxyribonuclease RuvC (Burkholderia thailandensis (strain ATCC 700388 / DSM 13276 / CCUG 48851 / CIP 106301 / E264)).